Reading from the N-terminus, the 341-residue chain is UDP-3-O-acylglucosamine N-acyltransferase (341 aa).

Catalysis depends on His241, which acts as the Proton acceptor.

Belongs to the transferase hexapeptide repeat family. LpxD subfamily. Homotrimer.

The enzyme catalyses a UDP-3-O-[(3R)-3-hydroxyacyl]-alpha-D-glucosamine + a (3R)-hydroxyacyl-[ACP] = a UDP-2-N,3-O-bis[(3R)-3-hydroxyacyl]-alpha-D-glucosamine + holo-[ACP] + H(+). It participates in bacterial outer membrane biogenesis; LPS lipid A biosynthesis. In terms of biological role, catalyzes the N-acylation of UDP-3-O-acylglucosamine using 3-hydroxyacyl-ACP as the acyl donor. Is involved in the biosynthesis of lipid A, a phosphorylated glycolipid that anchors the lipopolysaccharide to the outer membrane of the cell. The chain is UDP-3-O-acylglucosamine N-acyltransferase from Christiangramia forsetii (strain DSM 17595 / CGMCC 1.15422 / KT0803) (Gramella forsetii).